A 572-amino-acid chain; its full sequence is Isocitrate lyase (572 aa).

104 to 106 (SGW) provides a ligand contact to substrate. D175 serves as a coordination point for Mg(2+). The active-site Proton acceptor is C213. Substrate-binding positions include 214 to 215 (GH), R250, 437 to 441 (NLSPS), and T472. The disordered stretch occupies residues 550–572 (QFKGSWTGPGSESSSHVLAKSRM). The Microbody targeting signal motif lies at 570–572 (SRM).

Belongs to the isocitrate lyase/PEP mutase superfamily. Isocitrate lyase family. Mg(2+) serves as cofactor. In terms of tissue distribution, expressed in leaves.

Its subcellular location is the glyoxysome. It catalyses the reaction D-threo-isocitrate = glyoxylate + succinate. The protein operates within carbohydrate metabolism; glyoxylate cycle; (S)-malate from isocitrate: step 1/2. Functionally, involved in storage lipid mobilization during the growth of higher plant seedling. In Oryza sativa subsp. japonica (Rice), this protein is Isocitrate lyase.